Reading from the N-terminus, the 252-residue chain is Imidazole glycerol phosphate synthase subunit HisF (252 aa).

Active-site residues include aspartate 11 and aspartate 130.

Belongs to the HisA/HisF family. As to quaternary structure, heterodimer of HisH and HisF.

Its subcellular location is the cytoplasm. It catalyses the reaction 5-[(5-phospho-1-deoxy-D-ribulos-1-ylimino)methylamino]-1-(5-phospho-beta-D-ribosyl)imidazole-4-carboxamide + L-glutamine = D-erythro-1-(imidazol-4-yl)glycerol 3-phosphate + 5-amino-1-(5-phospho-beta-D-ribosyl)imidazole-4-carboxamide + L-glutamate + H(+). It functions in the pathway amino-acid biosynthesis; L-histidine biosynthesis; L-histidine from 5-phospho-alpha-D-ribose 1-diphosphate: step 5/9. Its function is as follows. IGPS catalyzes the conversion of PRFAR and glutamine to IGP, AICAR and glutamate. The HisF subunit catalyzes the cyclization activity that produces IGP and AICAR from PRFAR using the ammonia provided by the HisH subunit. In Streptococcus gordonii (strain Challis / ATCC 35105 / BCRC 15272 / CH1 / DL1 / V288), this protein is Imidazole glycerol phosphate synthase subunit HisF.